The chain runs to 632 residues: Chaperone protein HtpG (632 aa).

Residues 1-339 are a; substrate-binding; that stretch reads MTQQTMSFQA…SSDLPLNVSR (339 aa). The segment at 340–559 is b; sequence EILQESRDVK…DNDMSGYLQR (220 aa). Positions 560–632 are c; that stretch reads MLKAAGQSAP…TNALLLSRAA (73 aa).

The protein belongs to the heat shock protein 90 family. Homodimer.

The protein localises to the cytoplasm. Its function is as follows. Molecular chaperone. Has ATPase activity. The sequence is that of Chaperone protein HtpG from Burkholderia pseudomallei (strain 668).